The primary structure comprises 265 residues: L-histidine 2-aminobutanoyltransferase (265 aa).

It belongs to the methyltransferase superfamily. CntL family.

The catalysed reaction is L-histidine + S-adenosyl-L-methionine = (2S)-2-amino-4-{[(1S)-1-carboxy-2-(1H-imidazol-4-yl)ethyl]amino}butanoate + S-methyl-5'-thioadenosine + H(+). Functionally, catalyzes the nucleophilic attack of one alpha-aminobutanoate moiety from SAM onto L-histidine to produce the intermediate (2S)-2-amino-4-{[(1S)-1-carboxy-2-(1H-imidazol-4-yl)ethyl]amino}butanoate. Functions in the biosynthesis of the metallophore yersinopine, which is involved in metal acquisition and thus enables bacterial growth inside the host, where metal access is limited. Therefore, this enzyme probably contributes to Yersinia virulence. This chain is L-histidine 2-aminobutanoyltransferase, found in Yersinia pestis.